The chain runs to 189 residues: dCTP deaminase (189 aa).

Residues 112–117 (KSTYAR), 136–138 (TLE), Gln-157, Tyr-171, and Gln-181 contribute to the dCTP site. Residue Glu-138 is the Proton donor/acceptor of the active site.

The protein belongs to the dCTP deaminase family. In terms of assembly, homotrimer.

It carries out the reaction dCTP + H2O + H(+) = dUTP + NH4(+). It functions in the pathway pyrimidine metabolism; dUMP biosynthesis; dUMP from dCTP (dUTP route): step 1/2. Its function is as follows. Catalyzes the deamination of dCTP to dUTP. This is dCTP deaminase from Alcanivorax borkumensis (strain ATCC 700651 / DSM 11573 / NCIMB 13689 / SK2).